We begin with the raw amino-acid sequence, 244 residues long: MEVTGISAPTVMVFISSSLNSFRSEKRYSRSLTIAEFKCKLELVVGSPASCMELELYGADDKFYSKLDQEDALLGSYPVDDGCRIHVIDHSGVRLGEYEDVSKVEKYEISPEAYERRQNTVRSFMKRSKLGPYNEELRAQQEAEAAQRLSEEKAQASAISVGSRCEVRAPDHSLRRGTVMYVGLTDFKPGYWVGVRYDEPLGKNDGSVNGKRYFECQAKYGAFVKPSAVTVGDFPEEDYGLDEM.

Methionine 1 carries the post-translational modification N-acetylmethionine. Serine 65 is modified (phosphoserine; by PAK1). Tyrosine 98 carries the post-translational modification Phosphotyrosine. The residue at position 110 (serine 110) is a Phosphoserine. A Phosphoserine; by PAK1 modification is found at serine 128. Positions 183 to 225 constitute a CAP-Gly domain; it reads GLTDFKPGYWVGVRYDEPLGKNDGSVNGKRYFECQAKYGAFVK. N6-acetyllysine is present on lysine 219.

It belongs to the TBCB family. As to quaternary structure, supercomplex made of cofactors A to E. Cofactors A and D function by capturing and stabilizing tubulin in a quasi-native conformation. Cofactor E binds to the cofactor D-tubulin complex; interaction with cofactor C then causes the release of tubulin polypeptides that are committed to the native state. Cofactors B and E can form a heterodimer which binds to alpha-tubulin and enhances their ability to dissociate tubulin heterodimers. Interacts with GAN. Interacts with DCTN1. Post-translationally, phosphorylation by PAK1 is required for normal function. In terms of processing, ubiquitinated in the presence of GAN which targets it for degradation by the proteasome. As to expression, widely expressed with highest levels in brain. Broadly distributed throughout the neonate brain but restricted mainly to ependymary cells in the adult brain where it is concentrated in the cilia.

Its subcellular location is the cytoplasm. It localises to the cytoskeleton. Functionally, binds to alpha-tubulin folding intermediates after their interaction with cytosolic chaperonin in the pathway leading from newly synthesized tubulin to properly folded heterodimer. Involved in regulation of tubulin heterodimer dissociation. May function as a negative regulator of axonal growth. The sequence is that of Tubulin-folding cofactor B (Tbcb) from Mus musculus (Mouse).